The following is a 308-amino-acid chain: uncharacterized protein (308 aa).

Helical transmembrane passes span 10-30, 91-111, 115-135, 178-198, 219-239, 251-271, and 288-308; these read IILLSSIGITIASIIVETNLI, LPTILGESVFRVQLPLAVVIL, LGLIYVSLNVISGFLQALIGI, VIPMIVIFTLLINFLIKLGLM, ITVLIANLAHFSAGYTTVDIL, LIVLLIGNIISVTMIYLKHSI, and INYTISVMIKILLILLLIAFF.

The protein to M.jannaschii MJ0871, MJ1556 and MJ1589.

It localises to the cell membrane. This is an uncharacterized protein from Methanocaldococcus jannaschii (strain ATCC 43067 / DSM 2661 / JAL-1 / JCM 10045 / NBRC 100440) (Methanococcus jannaschii).